Consider the following 85-residue polypeptide: Large ribosomal subunit protein bL27 (85 aa).

The disordered stretch occupies residues M1–L21.

The protein belongs to the bacterial ribosomal protein bL27 family.

This chain is Large ribosomal subunit protein bL27, found in Pseudomonas entomophila (strain L48).